We begin with the raw amino-acid sequence, 153 residues long: MAAGLFGLSARRLLAAAATRGLPAARVRWESSFSRTVVAPSAVAGKRPPEPTTPWQEDPEPEDENLYEKNPDSHGYDKDPVLDVWNMRLVFFFGVSIILVLGSTFVAYLPDYRMKEWSRREAERLVKYREANGLPIMESNCFDPSKIQLPEDE.

Residues 1–29 (MAAGLFGLSARRLLAAAATRGLPAARVRW) constitute a mitochondrion transit peptide. Residues 40–76 (PSAVAGKRPPEPTTPWQEDPEPEDENLYEKNPDSHGY) form a disordered region. The segment covering 66–76 (LYEKNPDSHGY) has biased composition (basic and acidic residues). Residues 89-109 (LVFFFGVSIILVLGSTFVAYL) traverse the membrane as a helical segment.

Belongs to the complex I NDUFB11 subunit family. In terms of assembly, complex I is composed of 45 different subunits. Interacts with BCAP31. In terms of tissue distribution, ubiquitous.

The protein localises to the mitochondrion inner membrane. In terms of biological role, accessory subunit of the mitochondrial membrane respiratory chain NADH dehydrogenase (Complex I), that is believed not to be involved in catalysis. Complex I functions in the transfer of electrons from NADH to the respiratory chain. The immediate electron acceptor for the enzyme is believed to be ubiquinone. The chain is NADH dehydrogenase [ubiquinone] 1 beta subcomplex subunit 11, mitochondrial (NDUFB11) from Homo sapiens (Human).